The sequence spans 405 residues: Protein NCA1 (405 aa).

The disordered stretch occupies residues 1-85 (MTTTSVCPFS…GNLNKDSTDS (85 aa)). Composition is skewed to basic and acidic residues over residues 13–24 (ARPDDGSTRKQG) and 37–48 (ARPDDASARKQG). Polar residues predominate over residues 76–85 (GNLNKDSTDS). An RING-type zinc finger spans residues 108 to 142 (CMLCQALLYESSRCVPCTHVFCKVCLTRFKDCPLC). 2 TPR repeats span residues 247-280 (GAVL…LMKL) and 292-325 (SVSL…RRDA).

As to quaternary structure, interacts with the catalases CAT1, CAT2 and CAT3. This interaction is not induced by alkaline stress or H(2)O(2) and NaCl treatments. As to expression, expressed in roots, stems, leaves, flowers and siliques.

Its subcellular location is the cytoplasm. It is found in the nucleus. Its function is as follows. Has holdase chaperone activity that may fold catalase to a functional structure. Not required for the peroxisome import of catalases. Required for the activity of catalases and acts mainly at the post-transcriptional level. The chain is Protein NCA1 from Arabidopsis thaliana (Mouse-ear cress).